A 716-amino-acid polypeptide reads, in one-letter code: Polyribonucleotide nucleotidyltransferase (716 aa).

Mg(2+) contacts are provided by aspartate 490 and aspartate 496. The region spanning 556 to 615 (PKIETLTIPTDKIREVIGSGGKVIREIVETSGAKVDINDDGVIKIASNDQAAIKKAYDMI) is the KH domain. Positions 625–693 (GQIYTGKVVK…ERGKVRLGMK (69 aa)) constitute an S1 motif domain. A disordered region spans residues 695–716 (VDQETGQEIQPEKKEKEEAGEA). Over residues 704–716 (QPEKKEKEEAGEA) the composition is skewed to basic and acidic residues.

The protein belongs to the polyribonucleotide nucleotidyltransferase family. The cofactor is Mg(2+).

Its subcellular location is the cytoplasm. It catalyses the reaction RNA(n+1) + phosphate = RNA(n) + a ribonucleoside 5'-diphosphate. Its function is as follows. Involved in mRNA degradation. Catalyzes the phosphorolysis of single-stranded polyribonucleotides processively in the 3'- to 5'-direction. This is Polyribonucleotide nucleotidyltransferase from Cereibacter sphaeroides (strain ATCC 17029 / ATH 2.4.9) (Rhodobacter sphaeroides).